The primary structure comprises 397 residues: Elongation factor Tu (397 aa).

The region spanning 10–206 (KPHVNIGTIG…AVDENIPQPE (197 aa)) is the tr-type G domain. A G1 region spans residues 19 to 26 (GHVDHGKT). 19–26 (GHVDHGKT) contacts GTP. Thr-26 is a binding site for Mg(2+). The tract at residues 62–66 (GITIS) is G2. Residues 83 to 86 (DCPG) are G3. GTP contacts are provided by residues 83–87 (DCPGH) and 138–141 (NKAD). The G4 stretch occupies residues 138–141 (NKAD). A G5 region spans residues 176 to 178 (SAL).

It belongs to the TRAFAC class translation factor GTPase superfamily. Classic translation factor GTPase family. EF-Tu/EF-1A subfamily. As to quaternary structure, monomer.

The protein resides in the cytoplasm. The enzyme catalyses GTP + H2O = GDP + phosphate + H(+). GTP hydrolase that promotes the GTP-dependent binding of aminoacyl-tRNA to the A-site of ribosomes during protein biosynthesis. The polypeptide is Elongation factor Tu (Streptomyces cinnamoneus (Streptoverticillium cinnamoneum)).